We begin with the raw amino-acid sequence, 490 residues long: Betaine aldehyde dehydrogenase (490 aa).

K(+)-binding residues include Ile-27 and Asp-93. Residue 150–152 coordinates NAD(+); the sequence is GAW. The active-site Charge relay system is Lys-162. Position 176–179 (176–179) interacts with NAD(+); it reads KPSE. Val-180 serves as a coordination point for K(+). 230–233 lines the NAD(+) pocket; the sequence is GTTT. Residue Leu-246 coordinates K(+). The active-site Proton acceptor is the Glu-252. NAD(+) contacts are provided by Gly-254, Cys-286, and Glu-387. Catalysis depends on Cys-286, which acts as the Nucleophile. The residue at position 286 (Cys-286) is a Cysteine sulfenic acid (-SOH). Lys-457 and Gly-460 together coordinate K(+). The active-site Charge relay system is the Glu-464.

The protein belongs to the aldehyde dehydrogenase family. As to quaternary structure, dimer of dimers. K(+) is required as a cofactor.

It carries out the reaction betaine aldehyde + NAD(+) + H2O = glycine betaine + NADH + 2 H(+). It participates in amine and polyamine biosynthesis; betaine biosynthesis via choline pathway; betaine from betaine aldehyde: step 1/1. Its function is as follows. Involved in the biosynthesis of the osmoprotectant glycine betaine. Catalyzes the irreversible oxidation of betaine aldehyde to the corresponding acid. The polypeptide is Betaine aldehyde dehydrogenase (Pseudomonas putida (strain ATCC 700007 / DSM 6899 / JCM 31910 / BCRC 17059 / LMG 24140 / F1)).